Reading from the N-terminus, the 231-residue chain is RIQAYRFRTRVPPSPAASGSPRSTRRDVAVQAKGSWLPGLQSPAYLDGSLEGDNGFDPLALAEDPEDLRWFVQADVVNGRWAMLGVAGMLIPEVLTKAGLMNAPEWLRLPGKETYFASSSTALRVHMSSTYVEIRRWQDIKNPGSVNQDPIFKSYSLPPHECGYPGRVFNPLNFAPLENKEKELANGRLAMLAFLGFLVQHNVHGKGPFENLQQHLADPWHNTIIQTISGQ.

The interval 1-25 (RIQAYRFRTRVPPSPAASGSPRSTR) is disordered. Residues 1–31 (RIQAYRFRTRVPPSPAASGSPRSTRRDVAVQ) constitute a chloroplast transit peptide. Tryptophan 36 contributes to the chlorophyll b binding site. A chlorophyll a-binding site is contributed by phenylalanine 56. Chlorophyll b contacts are provided by arginine 80, serine 118, glutamate 133, and arginine 136. Lysine 182, glutamate 183, asparagine 186, arginine 188, glutamine 200, and histidine 215 together coordinate chlorophyll a. Residues 183 to 199 (ELANGRLAMLAFLGFLV) traverse the membrane as a helical segment.

The protein belongs to the light-harvesting chlorophyll a/b-binding (LHC) protein family. As to quaternary structure, the LHC complex consists of chlorophyll a-b binding proteins. Binds at least 14 chlorophylls (8 Chl-a and 6 Chl-b) and carotenoids such as lutein and neoxanthin. serves as cofactor. Post-translationally, photoregulated by reversible phosphorylation of its threonine residues.

It localises to the plastid. Its subcellular location is the chloroplast thylakoid membrane. Its function is as follows. The light-harvesting complex (LHC) functions as a light receptor, it captures and delivers excitation energy to photosystems with which it is closely associated. The polypeptide is Chlorophyll a-b binding protein 1B-20, chloroplastic (LHC Ib-20) (Hordeum vulgare (Barley)).